The chain runs to 198 residues: Holliday junction branch migration complex subunit RuvA (198 aa).

Residues 1-61 form a domain I region; it reads MILYRIGEII…EYQYATYAFK (61 aa). Residues 62–139 are domain II; that stretch reads DFKERLLFVD…KMISPKDAAK (78 aa). The interval 140-144 is flexible linker; the sequence is INETT. The segment at 144–198 is domain III; the sequence is TNTLSEVKETLKMVGFKTKQIDGALSKISSTDDVEKMIEEAIKLMSTQNYESATA.

The protein belongs to the RuvA family. In terms of assembly, homotetramer. Forms an RuvA(8)-RuvB(12)-Holliday junction (HJ) complex. HJ DNA is sandwiched between 2 RuvA tetramers; dsDNA enters through RuvA and exits via RuvB. An RuvB hexamer assembles on each DNA strand where it exits the tetramer. Each RuvB hexamer is contacted by two RuvA subunits (via domain III) on 2 adjacent RuvB subunits; this complex drives branch migration. In the full resolvosome a probable DNA-RuvA(4)-RuvB(12)-RuvC(2) complex forms which resolves the HJ.

It is found in the cytoplasm. Its function is as follows. The RuvA-RuvB-RuvC complex processes Holliday junction (HJ) DNA during genetic recombination and DNA repair, while the RuvA-RuvB complex plays an important role in the rescue of blocked DNA replication forks via replication fork reversal (RFR). RuvA specifically binds to HJ cruciform DNA, conferring on it an open structure. The RuvB hexamer acts as an ATP-dependent pump, pulling dsDNA into and through the RuvAB complex. HJ branch migration allows RuvC to scan DNA until it finds its consensus sequence, where it cleaves and resolves the cruciform DNA. This is Holliday junction branch migration complex subunit RuvA from Mycoplasmopsis agalactiae (strain NCTC 10123 / CIP 59.7 / PG2) (Mycoplasma agalactiae).